The chain runs to 1403 residues: MSASGDGTRVPPKSKGKTLSSFFGSLPGFSSARNLVSHTHSSTSTKDLQTATDPSGTPAPSSKVSTNSQMAGDAAGLLQPSEQTAGDKDMGSFSVTSSEDAFSGVFGIMDAAKGMVQGGLGATQSALVGTKEAVSGGVMGAVGVAKGLVKGGLDTSKNVLTNTKDTVTTGVMGAANMAKGTVQTGLDTTKSVVMGTKDTVATGLAGAVNVAKGTIQGGLDTTKSVVMGTKDTVTTGLTGAVNVAKGVVQGGLDTTKSVVMGTKDTVTTGLTGAMNVAKGTAQMGIDTSKTVLTGTKDTVCAGATGAINVAKGAAQGGLDTTKSVLIGTKDTVTTGLTGAVNVAKGAVQGGLDTTKSVVMGTKDTVTTGLTGAMNVAKGTAQMGLGTSKTVLTGTKDTVCAGLTGAINVAKGAAQGGLDTTKSVLMGTKDTVTTGLTGAVNVAKGTIQGGLDTTKSVVMGTKDTVTTGLTGAVNVAKGTIQGGLDTTKSVVMGTKDTVTTGLTGAVNVAKGAAQGGLDTTKSVVMGTKDTVTTGLTGAMNVAKGTAQMGLGTSKTVLTGTKDTVCAGLTGAINVAKGAAQGGLDTTKSVLMGTKDTVTTGLTGAVNVAKGTIQGGLDTTKSVVMGTKDTVTTGLTGAVNVAKGAVQGGLDTTKSVVMGTKDTVTTGLTGALNVAKGTAQMGIDTSKTVLIGTKDTVCAGATGAINMAKGAAQGGLDTTKSVLMGTKDTVTTGLTGAINVAKGSAQGGLDTTKSVLIGTKDTVTTGLTGALNVAKGTVQTGLDTSQRVLTGTKDNVYAGVTGAVNVAKGTIQGGLDTTKSVVMGTKDTVTTGLTGAVNVAKGAVQGGLDTTKSVVMGTKDTVTTGLTGAMNVAKGTAQMGIDTSKTVLTGTKDTVCAGLTGAINVAKGATQGGLDTTKSVLMGTKDTVTTGLTGAINVAKGAAQGGLDTTKSVLLGTKDTVTTGLTGAANVAKETVQMGLDTSKNILMDTKDSICAGATGAITVVKGAAQGGLDTSNAALTGTMDTAKGTVQTSLDTSKHMLIGMKDTVCAGVTSAMNMAKGIHKNTDTTRDTQSSVLAHSGNVATNAIHTGVHTVPSSLSGSHSIICHEPSIYRATNHGVGQAILTSTESLCCETSSFSDKYGLGHVTEPRADTKTLVSGMASSACAATRSVEECGQLAATGFAALPDELKGLGDIFQPMTTEEQAQLAVSESGPRVLSADRGSYYIRLGDLAPSFRQRAFEHALSHIQHNQFQARAALAQLQEAFQMTDMTMEAACGKLCSDQSLNTMVEAVGSHEMRASVAQDRLCTLAHQLHAAYSSLVTSLQGLPEVQQQAGQARHSLCKLYGLVSSEAGSELQTEQLAQSSAGVVEAWQGLEVLLEKLQQNPPLSWLVGPFTSMPCGQL.

Positions 1-21 are disordered; the sequence is MSASGDGTRVPPKSKGKTLSS. A phosphoserine mark is found at Ser-25 and Ser-31. The interval 33–70 is disordered; it reads RNLVSHTHSSTSTKDLQTATDPSGTPAPSSKVSTNSQM. 29 tandem repeats follow at residues 104–136, 137–169, 170–202, 203–235, 236–268, 269–301, 302–334, 335–367, 368–400, 401–433, 434–466, 467–499, 500–532, 533–565, 566–598, 599–631, 632–664, 665–697, 698–730, 731–763, 764–796, 797–829, 830–862, 863–895, 896–928, 929–961, 962–994, 995–1027, and 1028–1060. The interval 104–1060 is 29 X 33 AA approximate tandem repeat; that stretch reads GVFGIMDAAK…VTSAMNMAKG (957 aa). Ser-1281 bears the Phosphoserine mark. Thr-1287 carries the phosphothreonine modification.

Belongs to the perilipin family. Specifically expressed in white adipose tissue and also weakly detected in heart and skeletal muscle (at protein level).

Its subcellular location is the cell membrane. The protein localises to the cytoplasm. It localises to the lipid droplet. In terms of biological role, may play a role in triacylglycerol packaging into adipocytes. May function as a coat protein involved in the biogenesis of lipid droplets. The protein is Perilipin-4 (Plin4) of Mus musculus (Mouse).